We begin with the raw amino-acid sequence, 358 residues long: Transcriptional repressor protein KorB (358 aa).

A compositionally biased stretch (low complexity) spans 1 to 42; the sequence is MTAAQAKTTKKNTAAAAQEAAGAAQPSGLGLDSIGDLSSLLD. 2 disordered regions span residues 1–79 and 256–305; these read MTAA…FSPE and DPNT…DKLK. Over residues 275–285 the composition is skewed to acidic residues; it reads AGDGQDGEDGD. A compositionally biased stretch (basic and acidic residues) spans 286–305; it reads QDGKDAKEKGAKEPDPDKLK.

Belongs to the ParB family.

Functionally, in conjunction with KorA, inhibits the transcription of the kilA, trfA and korAB operons. Is also involved in the negative control of the kilB operon. In Escherichia coli, this protein is Transcriptional repressor protein KorB (korB).